A 509-amino-acid chain; its full sequence is Probable DNA ligase (509 aa).

Asp218 is a binding site for ATP. Lys220 (N6-AMP-lysine intermediate) is an active-site residue. Residues Arg225, Arg240, Glu269, Phe302, Arg374, and Lys380 each contribute to the ATP site.

It belongs to the ATP-dependent DNA ligase family. Requires Mg(2+) as cofactor.

It carries out the reaction ATP + (deoxyribonucleotide)n-3'-hydroxyl + 5'-phospho-(deoxyribonucleotide)m = (deoxyribonucleotide)n+m + AMP + diphosphate.. In terms of biological role, DNA ligase that seals nicks in double-stranded DNA during DNA replication, DNA recombination and DNA repair. The sequence is that of Probable DNA ligase from Nocardioides sp. (strain ATCC BAA-499 / JS614).